The sequence spans 292 residues: Bifunctional protein FolD (292 aa).

Residues 161 to 163 (GRS) and Ile-231 each bind NADP(+).

Belongs to the tetrahydrofolate dehydrogenase/cyclohydrolase family. Homodimer.

The enzyme catalyses (6R)-5,10-methylene-5,6,7,8-tetrahydrofolate + NADP(+) = (6R)-5,10-methenyltetrahydrofolate + NADPH. It carries out the reaction (6R)-5,10-methenyltetrahydrofolate + H2O = (6R)-10-formyltetrahydrofolate + H(+). The protein operates within one-carbon metabolism; tetrahydrofolate interconversion. Functionally, catalyzes the oxidation of 5,10-methylenetetrahydrofolate to 5,10-methenyltetrahydrofolate and then the hydrolysis of 5,10-methenyltetrahydrofolate to 10-formyltetrahydrofolate. The polypeptide is Bifunctional protein FolD (Protochlamydia amoebophila (strain UWE25)).